We begin with the raw amino-acid sequence, 196 residues long: Nucleotide kinase gp1.7 (196 aa).

A disordered region spans residues 97–118 (PRKPHLNKPEVTPTDDQPSAET).

As to quaternary structure, dodecamer.

It carries out the reaction dGMP + ATP = dGDP + ADP. The catalysed reaction is dTMP + ATP = dTDP + ADP. Functionally, nucleotide kinase that catalyzes the phosphorylation of dGMP and dTMP to dGDP and dTDP. A double mutation in this protein and the RecBCD inhibitor gp5.9 protein allow phage to overcome the retron Ec48 bacteriophage defense system. This protein alone when overexpressed in E.coli does not cause growth arrest; Y128C may be a silent mutation. The polypeptide is Nucleotide kinase gp1.7 (Escherichia coli (Bacteriophage T7)).